We begin with the raw amino-acid sequence, 400 residues long: Subtilisin-like protease 11 (400 aa).

The N-terminal stretch at 1–19 (MGLFKVIFTAVAALSAVDA) is a signal peptide. A propeptide spanning residues 20–117 (AELLSSAKSK…VEHDRHVYIS (98 aa)) is cleaved from the precursor. The region spanning 35 to 116 (SYLVVMKDSV…FVEHDRHVYI (82 aa)) is the Inhibitor I9 domain. One can recognise a Peptidase S8 domain in the interval 127–400 (SWGLGRVSHR…NKLLYNGSGK (274 aa)). A glycan (N-linked (GlcNAc...) asparagine) is linked at Asn138. Asp159 functions as the Charge relay system in the catalytic mechanism. Residue Asn181 is glycosylated (N-linked (GlcNAc...) asparagine). The Charge relay system role is filled by His191. Asn252 and Asn337 each carry an N-linked (GlcNAc...) asparagine glycan. The active-site Charge relay system is Ser346. 2 N-linked (GlcNAc...) asparagine glycosylation sites follow: Asn388 and Asn396.

It belongs to the peptidase S8 family.

The protein localises to the secreted. In terms of biological role, secreted subtilisin-like serine protease with keratinolytic activity that contributes to pathogenicity. The polypeptide is Subtilisin-like protease 11 (SUB11) (Arthroderma benhamiae (strain ATCC MYA-4681 / CBS 112371) (Trichophyton mentagrophytes)).